A 23-amino-acid chain; its full sequence is Aurein-4.4 (23 aa).

This sequence belongs to the frog skin active peptide (FSAP) family. Aurein subfamily. As to expression, expressed by the skin dorsal glands.

It is found in the secreted. In terms of biological role, has no antimicrobial or anticancer activity. The polypeptide is Aurein-4.4 (Ranoidea aurea (Green and golden bell frog)).